Reading from the N-terminus, the 535-residue chain is Portal protein (535 aa).

It belongs to the podoviridae portal protein family. In terms of assembly, homododecamer. Interacts with major capsid protein. Interacts with the tail tube proteins gp11 and gp12. Interacts with the terminase large subunit. Interacts with the internal virion protein gp14.

The protein resides in the virion. Functionally, forms the portal vertex of the capsid. This portal plays critical roles in head assembly, genome packaging, neck/tail attachment, and genome ejection. The portal protein multimerizes as a single ring-shaped homododecamer arranged around a central channel. The chain is Portal protein (8) from Enterobacteria phage T3 (Bacteriophage T3).